The chain runs to 278 residues: Phosphonates import ATP-binding protein PhnC 1 (278 aa).

The region spanning 5–253 (IRVDSLNKTF…FLNELYGAEG (249 aa)) is the ABC transporter domain. 37–44 (GASGSGKS) is an ATP binding site.

It belongs to the ABC transporter superfamily. Phosphonates importer (TC 3.A.1.9.1) family. As to quaternary structure, the complex is composed of two ATP-binding proteins (PhnC), two transmembrane proteins (PhnE) and a solute-binding protein (PhnD).

The protein resides in the cell inner membrane. It carries out the reaction phosphonate(out) + ATP + H2O = phosphonate(in) + ADP + phosphate + H(+). In terms of biological role, part of the ABC transporter complex PhnCDE involved in phosphonates import. Responsible for energy coupling to the transport system. The polypeptide is Phosphonates import ATP-binding protein PhnC 1 (Pseudomonas aeruginosa (strain UCBPP-PA14)).